The chain runs to 20 residues: Chrysophsin-3 (20 aa).

Position 20 is a histidine amide (His20).

As to expression, gill.

The protein resides in the secreted. Has antibacterial activity against Gram-positive bacteria B.subtilis ATCC 6633, L.garvieae ATCC 49156 and S.iniae F-8502, and Gram-negative bacteria E.coli WT-2, V.anguillarum ATCC 19264, V.penaeicida KHA, V.harveyi ATCC 14126, V.vulnificus ATCC 33148, A.salmonicida NCMB 1102 and P.putida ATCC 12633. Has hemolytic activity against human red blood cells. Seems to disrupt the membranes by adopting an alpha helical conformation. May play a significant role in innate host defense. This Pagrus major (Red sea bream) protein is Chrysophsin-3.